We begin with the raw amino-acid sequence, 344 residues long: Phenylalanine--tRNA ligase alpha subunit (344 aa).

Glutamate 256 contributes to the Mg(2+) binding site.

Belongs to the class-II aminoacyl-tRNA synthetase family. Phe-tRNA synthetase alpha subunit type 1 subfamily. In terms of assembly, tetramer of two alpha and two beta subunits. It depends on Mg(2+) as a cofactor.

It localises to the cytoplasm. The catalysed reaction is tRNA(Phe) + L-phenylalanine + ATP = L-phenylalanyl-tRNA(Phe) + AMP + diphosphate + H(+). The polypeptide is Phenylalanine--tRNA ligase alpha subunit (pheS) (Halalkalibacterium halodurans (strain ATCC BAA-125 / DSM 18197 / FERM 7344 / JCM 9153 / C-125) (Bacillus halodurans)).